We begin with the raw amino-acid sequence, 165 residues long: MALGLEDKKAIVAEVNEAAKGALSAVVADSRGVTVGDMTGLRKAAREAGVYVKVVRNTLVKRAVAGTDFECLADTFTGPTLIAFSNEHPGAAARLLKDFAKEQEKFEIKAAAFEGELIPADNIDRLAKLPTYEEALAQFMMTLKEASAGKLVRTLAALRDQKEAA.

This sequence belongs to the universal ribosomal protein uL10 family. In terms of assembly, part of the ribosomal stalk of the 50S ribosomal subunit. The N-terminus interacts with L11 and the large rRNA to form the base of the stalk. The C-terminus forms an elongated spine to which L12 dimers bind in a sequential fashion forming a multimeric L10(L12)X complex.

Forms part of the ribosomal stalk, playing a central role in the interaction of the ribosome with GTP-bound translation factors. The chain is Large ribosomal subunit protein uL10 from Shewanella piezotolerans (strain WP3 / JCM 13877).